A 209-amino-acid chain; its full sequence is Ion-translocating oxidoreductase complex subunit G (209 aa).

The Cytoplasmic segment spans residues 1–8 (MLTAIRKN). Residues 9–29 (GLILAVFACVSTGLVALTYAL) traverse the membrane as a helical segment. The Periplasmic portion of the chain corresponds to 30 to 209 (TAEQIQQQEQ…HNQPNPCEGQ (180 aa)). Thr-175 bears the FMN phosphoryl threonine mark.

Belongs to the RnfG family. The complex is composed of six subunits: RnfA, RnfB, RnfC, RnfD, RnfE and RnfG. FMN is required as a cofactor.

The protein resides in the cell inner membrane. In terms of biological role, part of a membrane-bound complex that couples electron transfer with translocation of ions across the membrane. The protein is Ion-translocating oxidoreductase complex subunit G of Vibrio cholerae serotype O1 (strain ATCC 39541 / Classical Ogawa 395 / O395).